Here is a 196-residue protein sequence, read N- to C-terminus: Large ribosomal subunit protein bL9 (196 aa).

It belongs to the bacterial ribosomal protein bL9 family.

Functionally, binds to the 23S rRNA. The protein is Large ribosomal subunit protein bL9 of Rhodopseudomonas palustris (strain HaA2).